Consider the following 243-residue polypeptide: Mesoderm posterior protein 1 (243 aa).

The segment at 1 to 86 (MAQPLCEPRS…QRQSASEREK (86 aa)) is disordered. Polar residues predominate over residues 27 to 36 (DGNSVCSPAW). The bHLH domain occupies 76 to 130 (GQRQSASEREKLRMRTLARALHELRRFLPPSVAPTGQNLTKIETLRLAIRYIGHL). A CPLCP motif is present at residues 153–157 (CPLCP). The tract at residues 204–228 (AETASQERQEMEPSPSSPLFSSDML) is disordered.

In terms of tissue distribution, no expression was detected in adult tissues except the testis. Expression in the testis was regulated developmentally; expressed 2 weeks after birth, and increases, reaching the full expression level in mature testes.

It localises to the nucleus. In terms of biological role, transcription factor. Plays a role in the epithelialization of somitic mesoderm and in the development of cardiac mesoderm. Defines the rostrocaudal patterning of the somites by participating in distinct Notch pathways. This chain is Mesoderm posterior protein 1 (Mesp1), found in Mus musculus (Mouse).